A 335-amino-acid polypeptide reads, in one-letter code: S-adenosylmethionine decarboxylase proenzyme (335 aa).

Catalysis depends on residues glutamate 12 and glutamate 15. Serine 70 functions as the Schiff-base intermediate with substrate; via pyruvic acid in the catalytic mechanism. Serine 70 carries the post-translational modification Pyruvic acid (Ser); by autocatalysis. The active-site Proton donor; for catalytic activity is the cysteine 84. Residues serine 231 and histidine 245 each act as proton acceptor; for processing activity in the active site.

Belongs to the eukaryotic AdoMetDC family. Requires pyruvate as cofactor. Is synthesized initially as an inactive proenzyme. Formation of the active enzyme involves a self-maturation process in which the active site pyruvoyl group is generated from an internal serine residue via an autocatalytic post-translational modification. Two non-identical subunits are generated from the proenzyme in this reaction, and the pyruvate is formed at the N-terminus of the alpha chain, which is derived from the carboxyl end of the proenzyme. The post-translation cleavage follows an unusual pathway, termed non-hydrolytic serinolysis, in which the side chain hydroxyl group of the serine supplies its oxygen atom to form the C-terminus of the beta chain, while the remainder of the serine residue undergoes an oxidative deamination to produce ammonia and the pyruvoyl group blocking the N-terminus of the alpha chain.

The catalysed reaction is S-adenosyl-L-methionine + H(+) = S-adenosyl 3-(methylsulfanyl)propylamine + CO2. It functions in the pathway amine and polyamine biosynthesis; S-adenosylmethioninamine biosynthesis; S-adenosylmethioninamine from S-adenosyl-L-methionine: step 1/1. In terms of biological role, essential for biosynthesis of the polyamines spermidine and spermine. Promotes maintenance and self-renewal of embryonic stem cells, by maintaining spermine levels. The sequence is that of S-adenosylmethionine decarboxylase proenzyme (amd1) from Xenopus laevis (African clawed frog).